Reading from the N-terminus, the 473-residue chain is Photosystem II CP43 reaction center protein (473 aa).

Residues 1–14 (MKTLYSLRRFYHVE) constitute a propeptide that is removed on maturation. Residue Thr-15 is modified to N-acetylthreonine. Thr-15 is subject to Phosphothreonine. 5 consecutive transmembrane segments (helical) span residues 69–93 (LFEV…PHLA), 134–155 (LLGP…KDRN), 178–200 (KALY…RKIT), 255–275 (KPFA…LSYS), and 291–312 (WFNN…ASQA). A [CaMn4O5] cluster-binding site is contributed by Glu-367. The helical transmembrane segment at 447–471 (RARAAAAGFEKGIDRDFEPVLFMTP) threads the bilayer.

Belongs to the PsbB/PsbC family. PsbC subfamily. PSII is composed of 1 copy each of membrane proteins PsbA, PsbB, PsbC, PsbD, PsbE, PsbF, PsbH, PsbI, PsbJ, PsbK, PsbL, PsbM, PsbT, PsbX, PsbY, PsbZ, Psb30/Ycf12, at least 3 peripheral proteins of the oxygen-evolving complex and a large number of cofactors. It forms dimeric complexes. The cofactor is Binds multiple chlorophylls and provides some of the ligands for the Ca-4Mn-5O cluster of the oxygen-evolving complex. It may also provide a ligand for a Cl- that is required for oxygen evolution. PSII binds additional chlorophylls, carotenoids and specific lipids..

The protein localises to the plastid. It is found in the chloroplast thylakoid membrane. One of the components of the core complex of photosystem II (PSII). It binds chlorophyll and helps catalyze the primary light-induced photochemical processes of PSII. PSII is a light-driven water:plastoquinone oxidoreductase, using light energy to abstract electrons from H(2)O, generating O(2) and a proton gradient subsequently used for ATP formation. The chain is Photosystem II CP43 reaction center protein from Solanum tuberosum (Potato).